The chain runs to 39 residues: MTRTAVLLLTLLFLVAMAASDKIKTREVCWNEEECENWE.

An N-terminal signal peptide occupies residues 1-20 (MTRTAVLLLTLLFLVAMAAS). C29 and C35 are disulfide-bonded.

Expressed by the venom duct.

The protein localises to the secreted. Its function is as follows. Probable neurotoxin. The protein is Contryphan-Cal4 of Californiconus californicus (California cone).